The chain runs to 288 residues: Beta-lactamase CARB-4 (288 aa).

The first 17 residues, 1-17, serve as a signal peptide directing secretion; sequence MKLLLVFSLLIPSMVFA. Ser65 acts as the Acyl-ester intermediate in catalysis. A disulfide bridge connects residues Cys72 and Cys118. A substrate-binding site is contributed by 229–231; it reads RSG.

This sequence belongs to the class-A beta-lactamase family.

The enzyme catalyses a beta-lactam + H2O = a substituted beta-amino acid. Inhibited by clavulanic acid and sulbactam. Functionally, hydrolyzes carbenicillin. Methicillin and oxacillin are weakly hydrolyzed. This Pseudomonas aeruginosa protein is Beta-lactamase CARB-4 (carB4).